The primary structure comprises 182 residues: SAGA-associated factor 11 homolog (182 aa).

Residues 61 to 84 (GSGAAVEGEPEDSKPYTIVDQPDT) form a disordered region. An SGF11-type zinc finger spans residues 98–119 (CHCPNCNRIVAASRFAPHLEKC). The tract at residues 133–182 (RIANTRDVGTGNYFGGDEDDEDDADWSGEKRKKKISQVRTNGSKKNGKTS) is disordered. Acidic residues predominate over residues 148-158 (GDEDDEDDADW).

Belongs to the SGF11 family. In terms of assembly, component of some SAGA transcription coactivator-HAT complexes. Within the SAGA complex, participates in a subcomplex of SAGA called the DUB module (deubiquitination module).

The protein localises to the nucleus. Component of the transcription regulatory histone acetylation (HAT) complex SAGA, a multiprotein complex that activates transcription by remodeling chromatin and mediating histone acetylation and deubiquitination. Within the SAGA complex, participates in a subcomplex that specifically deubiquitinates histone H2B. The SAGA complex is recruited to specific gene promoters by activators, where it is required for transcription. The chain is SAGA-associated factor 11 homolog from Anopheles gambiae (African malaria mosquito).